A 152-amino-acid polypeptide reads, in one-letter code: MNPAYFLVLAAVCVSLLGAANIPPQPLSFYRYTEMIQCTIRGSLTYLDYMDYGCYCGTGSRGTPVDELDRCCQTHDNCYAEAEEHPKCSSLVKSPYMNLYSYTCSGGTITCNADNDECGAFICNCDRTAALCFAKAPYNEENKEIDISKRCQ.

The first 19 residues, 1–19 (MNPAYFLVLAAVCVSLLGA), serve as a signal peptide directing secretion. A propeptide spanning residues 20 to 27 (ANIPPQPL) is cleaved from the precursor. Disulfide bonds link cysteine 38–cysteine 104, cysteine 54–cysteine 151, cysteine 56–cysteine 72, cysteine 71–cysteine 132, cysteine 78–cysteine 125, cysteine 88–cysteine 118, and cysteine 111–cysteine 123. Ca(2+) is bound by residues tyrosine 55, glycine 57, and glycine 59. Residue histidine 75 is part of the active site. Aspartate 76 is a Ca(2+) binding site. The active site involves aspartate 126.

The protein belongs to the phospholipase A2 family. Group I subfamily. D49 sub-subfamily. Requires Ca(2+) as cofactor. Expressed by the venom gland.

It localises to the secreted. It carries out the reaction a 1,2-diacyl-sn-glycero-3-phosphocholine + H2O = a 1-acyl-sn-glycero-3-phosphocholine + a fatty acid + H(+). In terms of biological role, PLA2 catalyzes the calcium-dependent hydrolysis of the 2-acyl groups in 3-sn-phosphoglycerides. The protein is Acidic phospholipase A2 1 of Bungarus candidus (Malayan krait).